We begin with the raw amino-acid sequence, 559 residues long: 2-succinyl-5-enolpyruvyl-6-hydroxy-3-cyclohexene-1-carboxylate synthase (559 aa).

The protein belongs to the TPP enzyme family. MenD subfamily. In terms of assembly, homodimer. The cofactor is Mg(2+). Requires Mn(2+) as cofactor. Thiamine diphosphate serves as cofactor.

It catalyses the reaction isochorismate + 2-oxoglutarate + H(+) = 5-enolpyruvoyl-6-hydroxy-2-succinyl-cyclohex-3-ene-1-carboxylate + CO2. It participates in quinol/quinone metabolism; 1,4-dihydroxy-2-naphthoate biosynthesis; 1,4-dihydroxy-2-naphthoate from chorismate: step 2/7. The protein operates within quinol/quinone metabolism; menaquinone biosynthesis. In terms of biological role, catalyzes the thiamine diphosphate-dependent decarboxylation of 2-oxoglutarate and the subsequent addition of the resulting succinic semialdehyde-thiamine pyrophosphate anion to isochorismate to yield 2-succinyl-5-enolpyruvyl-6-hydroxy-3-cyclohexene-1-carboxylate (SEPHCHC). This Cytophaga hutchinsonii (strain ATCC 33406 / DSM 1761 / CIP 103989 / NBRC 15051 / NCIMB 9469 / D465) protein is 2-succinyl-5-enolpyruvyl-6-hydroxy-3-cyclohexene-1-carboxylate synthase.